A 152-amino-acid chain; its full sequence is Small ribosomal subunit protein uS5 (152 aa).

The region spanning 14–77 (FEEVIVNIGR…DDAHKNLVKV (64 aa)) is the S5 DRBM domain.

Belongs to the universal ribosomal protein uS5 family. Part of the 30S ribosomal subunit. Contacts proteins S4 and S8.

Functionally, with S4 and S12 plays an important role in translational accuracy. Its function is as follows. Located at the back of the 30S subunit body where it stabilizes the conformation of the head with respect to the body. The polypeptide is Small ribosomal subunit protein uS5 (Sulfurovum sp. (strain NBC37-1)).